The primary structure comprises 236 residues: Hydroxyacylglutathione hydrolase (236 aa).

Residues His-52, His-54, Asp-56, His-57, His-108, Asp-125, and His-163 each coordinate Zn(2+).

This sequence belongs to the metallo-beta-lactamase superfamily. Glyoxalase II family. As to quaternary structure, monomer. The cofactor is Zn(2+).

It carries out the reaction an S-(2-hydroxyacyl)glutathione + H2O = a 2-hydroxy carboxylate + glutathione + H(+). Its pathway is secondary metabolite metabolism; methylglyoxal degradation; (R)-lactate from methylglyoxal: step 2/2. Functionally, thiolesterase that catalyzes the hydrolysis of S-D-lactoyl-glutathione to form glutathione and D-lactic acid. The chain is Hydroxyacylglutathione hydrolase from Mannheimia succiniciproducens (strain KCTC 0769BP / MBEL55E).